Consider the following 1657-residue polypeptide: A disintegrin and metalloproteinase with thrombospondin motifs 7 (1657 aa).

The N-terminal stretch at M1–G20 is a signal peptide. The propeptide occupies P21–R220. An N-linked (GlcNAc...) asparagine glycan is attached at N84. The interval P165–S221 is disordered. Residues R180 to S191 show a composition bias toward polar residues. A Cysteine switch motif is present at residues G192–P199. Position 194 (C194) interacts with Zn(2+). The Peptidase M12B domain maps to K226–P437. 11 disulfide bridges follow: C302–C356, C331–C338, C350–C432, C389–C416, C459–C482, C470–C488, C477–C507, C501–C512, C535–C572, C539–C577, and C550–C562. H372 lines the Zn(2+) pocket. Residue E373 is part of the active site. Residues H376 and H382 each contribute to the Zn(2+) site. In terms of domain architecture, Disintegrin spans V447 to V522. The 56-residue stretch at D523–P578 folds into the TSP type-1 1 domain. An N-linked (GlcNAc...) asparagine glycan is attached at N622. The tract at residues Q683–Q794 is spacer. TSP type-1 domains lie at P804–P863, P864–V923, and C925–Q978. 5 disordered regions span residues L1009–D1034, G1073–Q1127, E1140–E1237, G1283–H1304, and T1317–A1384. Pro residues predominate over residues P1211–I1224. 2 stretches are compositionally biased toward polar residues: residues P1293 to H1304 and P1327 to P1342. TSP type-1 domains follow at residues Q1366–D1414, C1417–G1477, T1479–G1522, and C1524–H1584. The region spanning W1587–Q1627 is the PLAC domain.

Interacts with COMP. Zn(2+) serves as cofactor. In terms of processing, N-glycosylated. Can be O-fucosylated by POFUT2 on a serine or a threonine residue found within the consensus sequence C1-X(2)-(S/T)-C2-G of the TSP type-1 repeat domains where C1 and C2 are the first and second cysteine residue of the repeat, respectively. Fucosylated repeats can then be further glycosylated by the addition of a beta-1,3-glucose residue by the glucosyltransferase, B3GALTL. Fucosylation mediates the efficient secretion of ADAMTS family members. Can also be C-glycosylated with one or two mannose molecules on tryptophan residues within the consensus sequence W-X-X-W of the TPRs. N- and C-glycosylations can also facilitate secretion. Post-translationally, O-glycosylated proteoglycan; contains chondroitin sulfate. May be cleaved by a furin endopeptidase. The precursor is sequentially processed.

The protein localises to the secreted. The protein resides in the extracellular space. It localises to the extracellular matrix. Its function is as follows. Metalloprotease. Was previously shown to degrade COMP. However, a later study found no activity against COMP. In Mus musculus (Mouse), this protein is A disintegrin and metalloproteinase with thrombospondin motifs 7 (Adamts7).